The following is a 634-amino-acid chain: Heat shock 70-related protein 1, mitochondrial (634 aa).

The transit peptide at 1–20 (MFARRVCGSAAASAACLARH) directs the protein to the mitochondrion. Residues 538-614 (SEQHAEADRV…AAATDKLQKA (77 aa)) adopt a coiled-coil conformation.

Belongs to the heat shock protein 70 family.

Its subcellular location is the mitochondrion. The chain is Heat shock 70-related protein 1, mitochondrial (HSP70.1) from Leishmania major.